The primary structure comprises 316 residues: 4-hydroxyphenylacetate decarboxylase activating enzyme (316 aa).

A Radical SAM core domain is found at 20–307; it reads HDGPGCRTTV…QDIFLDNGIA (288 aa). Positions 34, 38, 41, 60, 66, 69, and 105 each coordinate [4Fe-4S] cluster. 40–42 lines the S-adenosyl-L-methionine pocket; sequence WCA. Positions 84-115 constitute a 4Fe-4S ferredoxin-type domain; the sequence is NKPVIDWNICKDCESFECVNSCYYNAFKLCAK. Residues Gly-144, 193–195, and His-267 each bind S-adenosyl-L-methionine; that span reads DIK.

This sequence belongs to the organic radical-activating enzymes family. As to quaternary structure, monomer. Requires [4Fe-4S] cluster as cofactor.

The catalysed reaction is glycyl-[protein] + reduced [flavodoxin] + S-adenosyl-L-methionine = glycin-2-yl radical-[protein] + semiquinone [flavodoxin] + 5'-deoxyadenosine + L-methionine + H(+). In terms of biological role, catalyzes activation of 4-hydroxyphenylacetate decarboxylase under anaerobic conditions by generation of an organic free radical on a glycine residue, via a homolytic cleavage of S-adenosyl-L-methionine (SAM). The sequence is that of 4-hydroxyphenylacetate decarboxylase activating enzyme from Clostridioides difficile (strain 630) (Peptoclostridium difficile).